The following is a 4095-amino-acid chain: Protein adenylyltransferase and cysteine protease IbpA (4095 aa).

Positions 1 to 97 (MNKNCYKLIF…MVAAPNFAQS (97 aa)) are cleaved as a signal peptide. Binds bovine IgG2 Fc stretches follow at residues 972-1515 (SERI…FVKA) and 1116-1255 (SEVQ…FLKE). 5 disordered regions span residues 1082 to 1117 (EVSD…LPSE), 1130 to 1154 (KEKA…LQSD), 1204 to 1223 (QEAL…AKAK), 1625 to 1652 (TVSH…TGFT), and 1705 to 1732 (EEDE…QKEE). A compositionally biased stretch (acidic residues) spans 1087 to 1096 (WERDPDEPDE). Composition is skewed to basic and acidic residues over residues 1097–1117 (PDYK…LPSE) and 1130–1139 (KEKAQQKRQA). Residues 1116–1247 (SEVQDKLRQK…AKDHQIEEAL (132 aa)) are a coiled coil. Positions 1716 to 1727 (KAKAAPDATDNA) are enriched in low complexity. Repeat copies occupy residues 2250–2271 (YSTL…SDDI), 2272–2295 (YSLL…AEGA), 2296–2317 (YDLL…SDDL), 2318–2343 (YSTV…AAGP), 2344–2365 (YSLL…GEGP), 2366–2387 (YSLL…SNST), 2388–2413 (YSTV…VAGP), 2414–2435 (YSLL…GEGP), 2436–2457 (YSLL…SDSP), 2458–2483 (YSTV…VAGP), 2484–2505 (YSLL…GEGP), and 2506–2527 (YSLL…SDSP). A 12 X 22 AA approximate repeats region spans residues 2250 to 2527 (YSTLGDQNAN…RTLGGESDSP (278 aa)). Composition is skewed to polar residues over residues 2592–2611 (SDTE…TRNA) and 2794–2803 (TAPQKTSPVK). Disordered stretches follow at residues 2592–2617 (SDTE…PLPP), 2765–2809 (TIGE…SAEG), 2825–2894 (AKGQ…SPKR), 2914–2933 (LKSK…EPIY), 2943–3033 (LARA…KSED), and 3049–3069 (NKSQ…PNYD). Low complexity predominate over residues 2880–2889 (PFPSEFSSEP). Composition is skewed to polar residues over residues 2977-2996 (SNLS…QSVA) and 3005-3018 (AESN…QKLQ). Basic and acidic residues predominate over residues 3052–3062 (QAKEAKSEQET). Positions 3218–3355 (LTVEMIEKLN…AEVVKEFLTE (138 aa)) constitute a Fido 1 domain. The yopT-like stretch occupies residues 3222–4095 (MIEKLNHGLR…FNVVNYKKNN (874 aa)). The segment at 3354–3698 (TELGKKSSPQ…VDFINRAKNE (345 aa)) is binds bovine IgG2 Fc. Disordered regions lie at residues 3357-3415 (GKKS…PSVP) and 3432-3454 (AELK…ATGV). Composition is skewed to polar residues over residues 3360–3379 (SSPQ…SPVT) and 3388–3401 (VENT…TIKQ). The segment covering 3443 to 3454 (KAAEKSEGATGV) has biased composition (basic and acidic residues). The arm region stretch occupies residues 3535 to 3557 (IPEATVKQMSHLPEFDDILTEGA). In terms of domain architecture, Fido 2 spans 3640–3777 (LTVQMIENLN…SEVVVEFLKE (138 aa)). ATP contacts are provided by residues 3670 to 3671 (KE), 3722 to 3724 (GNG), Arg3728, and Gln3757. The segment covering 3783-3798 (SKEDNEQNLEKTDRTS) has biased composition (basic and acidic residues). Residues 3783-3829 (SKEDNEQNLEKTDRTSTDLTESAVENSAALSSGTVRSATVSETVTET) form a disordered region. Over residues 3799-3815 (TDLTESAVENSAALSSG) the composition is skewed to polar residues. Residues 3816-3829 (TVRSATVSETVTET) show a composition bias toward low complexity. Residues Cys3910, His4033, and Asp4048 each act as for cysteine protease activity in the active site.

The protein in the central section; belongs to the fic family. It in the C-terminal section; belongs to the peptidase C58 family. As to quaternary structure, immunoglobulin-binding protein. Post-translationally, the long form of the protein is probably processed, and/or the transcript may be subject to differential translational initiation.

It is found in the secreted. The protein resides in the cell outer membrane. The catalysed reaction is L-tyrosyl-[protein] + ATP = O-(5'-adenylyl)-L-tyrosyl-[protein] + diphosphate. It carries out the reaction L-threonyl-[protein] + ATP = 3-O-(5'-adenylyl)-L-threonyl-[protein] + diphosphate. In terms of biological role, adenylyltransferase involved in virulence by mediating the addition of adenosine 5'-monophosphate (AMP) to specific tyrosine residue of host Rho GTPases RhoA, Rac and Cdc42. The resulting AMPylation inactivates Rho GTPases, thereby inhibiting actin assembly in infected cells. Probably also acts as a cysteine protease, which may play a central role after invasion of host cell and in virulence. Possible member (with IbpB) of a 2 partner secretion. Probably able to bind bovine epithelial cells (host cells). May participate in the formation of fibrils at the surface of the bacteria. This Histophilus somni (strain 2336) (Haemophilus somnus) protein is Protein adenylyltransferase and cysteine protease IbpA (ibpA).